A 156-amino-acid chain; its full sequence is MNATRKQRLWLVIGVLTAAALAVTLIALALQRNMSYLFTPSQVDAGAAAGYQQFRLGGMVKAGSIQRATDSLTVTFKVIDKHAATQVEYTGILPDLFRDNQSVIANGRMQAGRFVANEVLAKHDETYMPKELKDAMAEGHVGKPIPAAAAPLSGVR.

The Cytoplasmic segment spans residues 1-8; the sequence is MNATRKQR. A helical; Signal-anchor for type II membrane protein membrane pass occupies residues 9 to 29; that stretch reads LWLVIGVLTAAALAVTLIALA. Residues 30–156 lie on the Periplasmic side of the membrane; sequence LQRNMSYLFT…AAAAPLSGVR (127 aa). Heme-binding residues include His-123 and Tyr-127.

Belongs to the CcmE/CycJ family.

It is found in the cell inner membrane. In terms of biological role, heme chaperone required for the biogenesis of c-type cytochromes. Transiently binds heme delivered by CcmC and transfers the heme to apo-cytochromes in a process facilitated by CcmF and CcmH. The protein is Cytochrome c-type biogenesis protein CcmE 1 of Xanthomonas campestris pv. campestris (strain 8004).